An 83-amino-acid chain; its full sequence is Exodeoxyribonuclease 7 small subunit (83 aa).

The protein belongs to the XseB family. In terms of assembly, heterooligomer composed of large and small subunits.

The protein resides in the cytoplasm. The enzyme catalyses Exonucleolytic cleavage in either 5'- to 3'- or 3'- to 5'-direction to yield nucleoside 5'-phosphates.. Functionally, bidirectionally degrades single-stranded DNA into large acid-insoluble oligonucleotides, which are then degraded further into small acid-soluble oligonucleotides. The protein is Exodeoxyribonuclease 7 small subunit of Bradyrhizobium diazoefficiens (strain JCM 10833 / BCRC 13528 / IAM 13628 / NBRC 14792 / USDA 110).